Consider the following 86-residue polypeptide: Putative membrane protein insertion efficiency factor (86 aa).

This sequence belongs to the UPF0161 family.

It is found in the cell inner membrane. Its function is as follows. Could be involved in insertion of integral membrane proteins into the membrane. The protein is Putative membrane protein insertion efficiency factor of Pseudomonas aeruginosa (strain UCBPP-PA14).